Consider the following 1253-residue polypeptide: Myosin-1 (1253 aa).

A disordered region spans residues 1 to 40 (MGHSRRPVGGEKKSRGFGRSKAAADVGDGRQAGKPQVKKA). In terms of domain architecture, Myosin motor spans 50-729 (IGVSDLTLLS…TLFALEAMRD (680 aa)). 143-150 (GESGAGKT) lines the ATP pocket. Residue Ser-371 is modified to Phosphoserine. Positions 418–500 (SIGILDIYGF…PGVFAALNDA (83 aa)) are actin-binding. 2 IQ domains span residues 733-753 (HNMA…RIEC) and 754-779 (ATRI…QGHQ). Residues 787–977 (RRRMSLLGSR…TIHTGAGEPA (191 aa)) form the TH1 domain. Disordered regions lie at residues 959 to 1083 (TGDD…PKKP) and 1139 to 1253 (QVAP…DDDW). The segment covering 1029–1055 (PQPAAAQPAAPQPAARVVPQPVAAVAA) has biased composition (low complexity). 2 stretches are compositionally biased toward pro residues: residues 1068 to 1081 (APPP…PAPK) and 1143 to 1155 (APKP…PPAA). The SH3 domain maps to 1080–1141 (PKKPTAKALY…PEAYLEEQVA (62 aa)). 2 stretches are compositionally biased toward low complexity: residues 1156–1173 (PRST…AKAK) and 1221–1235 (NSAS…LAEA).

It belongs to the TRAFAC class myosin-kinesin ATPase superfamily. Myosin family. Post-translationally, phosphorylation of the TEDS site (Ser-371) is required for the polarization of the actin cytoskeleton. Phosphorylation probably activates the myosin-I ATPase activity.

Its subcellular location is the cytoplasm. The protein resides in the cytoskeleton. It localises to the actin patch. Functionally, type-I myosin implicated in the organization of the actin cytoskeleton. Required for proper actin cytoskeleton polarization. At the cell cortex, assembles in patch-like structures together with proteins from the actin-polymerizing machinery and promotes actin assembly. Functions as actin nucleation-promoting factor (NPF) for the Arp2/3 complex. Plays an important role in polarized growth, spore germination, hyphal morphogenesis, and septal wall formation. In Aspergillus clavatus (strain ATCC 1007 / CBS 513.65 / DSM 816 / NCTC 3887 / NRRL 1 / QM 1276 / 107), this protein is Myosin-1 (myoA).